The following is a 164-amino-acid chain: Protein SprT (164 aa).

In terms of domain architecture, SprT-like spans 14-156 (QLAESFFKRP…LCRRCRNTLV (143 aa)). His69 provides a ligand contact to Zn(2+). Glu70 is a catalytic residue. A Zn(2+)-binding site is contributed by His73.

The protein belongs to the SprT family. The cofactor is Zn(2+).

The protein localises to the cytoplasm. This is Protein SprT from Pseudomonas fluorescens (strain Pf0-1).